The chain runs to 1088 residues: MLHIKDLIWTLYFIGTAVALEVNIVPDQGEISLGESKFFLCQVSGEATDISWYSPTGEKLVTQQQISVVRSDDYTSTLTIYNASSQDAGIYKCVASNEAEGESEGTVNLKIYQKLTFKNAPTPQEFKEGEDAVIICDVSSSIPSIITWRHKGKDVIFKKDVRFVVLANNYLQIRGIKKTDEGTYRCEGRILARGEINYKDIQVIVNVPPTIQARQLRVNATANMAESVVLSCDADGFPDPEISWLKKGEPIEDGEEKISFNEDQSEMTIHHVEKDDEAEYSCIANNQAGEAEATILLKVYAKPKITYVENKTAVELDEITLTCEASGDPIPSITWRTAVRNISSEATTLDGHIVVKEHIRMSALTLKDIQYTDAGEYFCIASNPIGVDMQAMYFEVQYAPKIRGPVVVYTWEGNPVNITCEVFAHPRAAVTWFRDGQLLPSSNFSNIKIYSGPTSSSLEVNPDSENDFGNYNCTAINTIGHEFSEFILVQADTPSSPAIRKVEPYSSTVMIVFDEPDSTGGVPILKYKAEWRVIGHEKWHTKYYDAKEVNAESIITVMGLKPETSYMVKLSAMNGKGLGDSTPSQEFTTQPVREPSAPKLVGHLSEDGNSIKVDILKQDDGGSPIRHYLVNYRALNALEWKPEMRVPSNSHHVMLKALEWNVDYEVIVVAENQQGKSKPALLSFRTTAKPTATTATASAGTGLGTGAIVGILIVIFVLLLVVVDVTCFFLNKCGLLMCIAVNFCGKAGPGAKGKDIEEGKAAFSKDESKEPIVEVRTEEERTPNHDGSNQIEPNETTPLTEPEHPAAVEDMLPSVTTVTTNSDTITETFATAQNSPTSETTTLTSSTAPPPTTAPDSNTIQSIQATPSKAEAPTTSSPPPTSSPKVAPLVDLSDTPTNNPSKVVANQAGPLNPSAATSAAEPPTVIIKPVTTVPPNAASPPPTPEPKQVKQEQSGTKSPEKEEAQPSTVKNPTEATKDESASLSNTKPLQDEDFQIDGGTFKTPEIDLAKDVFAALGTATPTAVASGKASELVSSTADTSVPLDSAKTEKTQVEEKSKPEEIDVKGTPAEVKTVPNEATQTNANESKA.

The signal sequence occupies residues 1 to 19 (MLHIKDLIWTLYFIGTAVA). 5 Ig-like C2-type domains span residues 20–108 (LEVN…GTVN), 113–202 (QKLT…KDIQ), 209–294 (PTIQ…AEAT), 303–397 (PKIT…FEVQ), and 400–484 (PKIR…HEFS). The Extracellular portion of the chain corresponds to 20 to 705 (LEVNIVPDQG…TASAGTGLGT (686 aa)). Disulfide bonds link cysteine 41–cysteine 93 and cysteine 136–cysteine 186. N-linked (GlcNAc...) asparagine glycosylation occurs at asparagine 82. Heparin is bound by residues 149–153 (RHKGK) and 158–162 (KKDVR). The N-linked (GlcNAc...) asparagine glycan is linked to asparagine 219. Cysteine 232 and cysteine 282 form a disulfide bridge. Asparagine 310, asparagine 341, asparagine 417, asparagine 443, and asparagine 472 each carry an N-linked (GlcNAc...) asparagine glycan. Cysteine 323 and cysteine 379 are joined by a disulfide. An intrachain disulfide couples cysteine 420 to cysteine 473. Fibronectin type-III domains follow at residues 493 to 592 (TPSS…TQPV) and 594 to 690 (EPSA…TAKP). Residues 706 to 723 (GAIVGILIVIFVLLLVVV) traverse the membrane as a helical segment. Residues 724 to 1088 (DVTCFFLNKC…TQTNANESKA (365 aa)) are Cytoplasmic-facing. The span at 758-784 (EGKAAFSKDESKEPIVEVRTEEERTPN) shows a compositional bias: basic and acidic residues. Disordered regions lie at residues 758–802 (EGKA…LTEP), 829–1000 (FATA…DGGT), and 1024–1088 (VASG…ESKA). Composition is skewed to low complexity over residues 835–847 (SPTSETTTLTSST), 854–875 (APDSNTIQSIQATPSKAEAPTT), and 913–936 (PSAATSAAEPPTVIIKPVTTVPPN). Over residues 965 to 974 (QPSTVKNPTE) the composition is skewed to polar residues. The span at 1046 to 1064 (AKTEKTQVEEKSKPEEIDV) shows a compositional bias: basic and acidic residues. Residues 1076 to 1088 (NEATQTNANESKA) are compositionally biased toward polar residues.

Post-translationally, polysialylated by ST8SIA2 and ST8SIA4. Polysialylation modulates cell interactions by confering both attractive and repulsive properties that are highly regulated by ST8SIA2 and ST8SIA4. Polysialylation is formed on a-2,3-linked sialic acid of core glycans. Expressed in neuron and in presumptive neural tissue.

Its subcellular location is the cell membrane. This protein is a cell adhesion molecule involved in neuron-neuron adhesion, neurite fasciculation, outgrowth of neurites, etc. In Xenopus laevis (African clawed frog), this protein is Neural cell adhesion molecule 1-A.